The chain runs to 533 residues: Probable protein kinase UbiB (533 aa).

A helical membrane pass occupies residues 24-44 (LILELPMLPWWLRLLGATLPW). Residues 126–494 (RFEREPLASA…WKGSRHDWLG (369 aa)) form the Protein kinase domain. Residues 132 to 140 (LASASVAQV) and lysine 154 contribute to the ATP site. Aspartate 289 functions as the Proton acceptor in the catalytic mechanism. Residues 510–530 (LGQQLEAWPAWVMLAGGVFLI) traverse the membrane as a helical segment.

The protein belongs to the ABC1 family. UbiB subfamily.

Its subcellular location is the cell inner membrane. It functions in the pathway cofactor biosynthesis; ubiquinone biosynthesis [regulation]. Is probably a protein kinase regulator of UbiI activity which is involved in aerobic coenzyme Q (ubiquinone) biosynthesis. In Pseudomonas aeruginosa (strain ATCC 15692 / DSM 22644 / CIP 104116 / JCM 14847 / LMG 12228 / 1C / PRS 101 / PAO1), this protein is Probable protein kinase UbiB.